Here is a 404-residue protein sequence, read N- to C-terminus: Cysteine desulfurase IscS (404 aa).

Residues 75 to 76 (AT), N155, Q183, and 203 to 205 (SAH) each bind pyridoxal 5'-phosphate. N6-(pyridoxal phosphate)lysine is present on K206. A pyridoxal 5'-phosphate-binding site is contributed by T243. C328 serves as the catalytic Cysteine persulfide intermediate. C328 is a [2Fe-2S] cluster binding site.

It belongs to the class-V pyridoxal-phosphate-dependent aminotransferase family. NifS/IscS subfamily. Homodimer. Forms a heterotetramer with IscU, interacts with other sulfur acceptors. The cofactor is pyridoxal 5'-phosphate.

The protein resides in the cytoplasm. The enzyme catalyses (sulfur carrier)-H + L-cysteine = (sulfur carrier)-SH + L-alanine. It participates in cofactor biosynthesis; iron-sulfur cluster biosynthesis. Functionally, master enzyme that delivers sulfur to a number of partners involved in Fe-S cluster assembly, tRNA modification or cofactor biosynthesis. Catalyzes the removal of elemental sulfur atoms from cysteine to produce alanine. Functions as a sulfur delivery protein for Fe-S cluster synthesis onto IscU, an Fe-S scaffold assembly protein, as well as other S acceptor proteins. In Pseudomonas putida (strain GB-1), this protein is Cysteine desulfurase IscS.